The chain runs to 295 residues: Putative fused nickel transport protein NikMN (295 aa).

8 consecutive transmembrane segments (helical) span residues 8–28 (LDLS…GYSI), 39–59 (LFGI…PIPG), 70–90 (LAGI…VLTI), 98–118 (GGIT…VFVG), 135–155 (FIAG…EIGI), 175–195 (ALLG…IAAA), 211–231 (LAVI…AELV), and 268–288 (AGTL…GFAL).

It belongs to the CbiM family. NikM subfamily.

It is found in the cell membrane. Functionally, may be involved in nickel transport. This chain is Putative fused nickel transport protein NikMN, found in Archaeoglobus fulgidus (strain ATCC 49558 / DSM 4304 / JCM 9628 / NBRC 100126 / VC-16).